The sequence spans 380 residues: NADPH oxidoreductase (380 aa).

Positions 58–164 (ARELRGRILG…AAPQGNFVLP (107 aa)) constitute an FAD-binding FR-type domain. Residues 299 to 380 (GTVTFARSGK…AASGDCVLDI (82 aa)) enclose the 2Fe-2S ferredoxin-type domain. Residues C333, C338, C341, and C368 each coordinate [2Fe-2S] cluster.

In terms of assembly, interacts with DesA3 to form a functional acyl-CoA desaturase complex. [2Fe-2S] cluster is required as a cofactor. FAD serves as cofactor.

It localises to the cell membrane. It functions in the pathway lipid metabolism; fatty acid metabolism. Is likely involved in the aerobic desaturation system responsible for the synthesis of oleic acid from stearoyl-CoA; oleic acid is a precursor of mycobacterial membrane phospholipids and triglycerides. Is the electron transfer partner for the stearoyl-CoA 9-desaturase DesA3. Catalyzes electron transfer reaction between NADPH and the diiron center of DesA3. Cannot use NADH. The polypeptide is NADPH oxidoreductase (Mycobacterium tuberculosis (strain ATCC 25618 / H37Rv)).